A 368-amino-acid polypeptide reads, in one-letter code: Acetyl-coenzyme A carboxylase carboxyl transferase subunit alpha (368 aa).

The 251-residue stretch at 44–294 (EIDNKLQEIY…RKSIEKNLNE (251 aa)) folds into the CoA carboxyltransferase C-terminal domain.

This sequence belongs to the AccA family. As to quaternary structure, acetyl-CoA carboxylase is a heterohexamer composed of biotin carboxyl carrier protein (AccB), biotin carboxylase (AccC) and two subunits each of ACCase subunit alpha (AccA) and ACCase subunit beta (AccD).

The protein resides in the cytoplasm. The enzyme catalyses N(6)-carboxybiotinyl-L-lysyl-[protein] + acetyl-CoA = N(6)-biotinyl-L-lysyl-[protein] + malonyl-CoA. It functions in the pathway lipid metabolism; malonyl-CoA biosynthesis; malonyl-CoA from acetyl-CoA: step 1/1. Functionally, component of the acetyl coenzyme A carboxylase (ACC) complex. First, biotin carboxylase catalyzes the carboxylation of biotin on its carrier protein (BCCP) and then the CO(2) group is transferred by the carboxyltransferase to acetyl-CoA to form malonyl-CoA. In Pelagibacter ubique (strain HTCC1062), this protein is Acetyl-coenzyme A carboxylase carboxyl transferase subunit alpha.